The primary structure comprises 430 residues: mRNA cap guanine-N(7) methyltransferase (430 aa).

Positions 1–88 (MALRPEKPVW…YDLEERKKKQ (88 aa)) are disordered. Positions 15–37 (QYDRQYGKLEEPKPPREESKPGD) are enriched in basic and acidic residues. Positions 136–419 (SPIIKLRNFN…FYTVFAFRKV (284 aa)) constitute an mRNA cap 0 methyltransferase domain. MRNA is bound at residue 145-146 (NN). Residues Lys-149, Gly-167, Asp-189, Asp-218, Gln-244, and Tyr-249 each coordinate S-adenosyl-L-methionine.

Belongs to the class I-like SAM-binding methyltransferase superfamily. mRNA cap 0 methyltransferase family.

It localises to the nucleus. It carries out the reaction a 5'-end (5'-triphosphoguanosine)-ribonucleoside in mRNA + S-adenosyl-L-methionine = a 5'-end (N(7)-methyl 5'-triphosphoguanosine)-ribonucleoside in mRNA + S-adenosyl-L-homocysteine. Functionally, responsible for methylating the 5'-cap structure of mRNAs. The sequence is that of mRNA cap guanine-N(7) methyltransferase (ABD1) from Eremothecium gossypii (strain ATCC 10895 / CBS 109.51 / FGSC 9923 / NRRL Y-1056) (Yeast).